A 21-amino-acid chain; its full sequence is Pollen allergen Ole e 7 (21 aa).

This is Pollen allergen Ole e 7 from Olea europaea (Common olive).